Here is a 130-residue protein sequence, read N- to C-terminus: Classical arabinogalactan protein 7 (130 aa).

The signal sequence occupies residues 1-21 (MNSKIIEAFFIVALFTTSCLA). Glutamine 22 is subject to Pyrrolidone carboxylic acid. A disordered region spans residues 22–108 (QAPAPSPTTT…DASAPPPNAA (87 aa)). 5 positions are modified to 4-hydroxyproline: proline 24, proline 26, proline 28, proline 35, and proline 36. Proline 24, proline 26, proline 28, proline 35, and proline 36 each carry an O-linked (Ara...) hydroxyproline glycan. The segment covering 33–68 (TPPPVATPPPAATPAPTTTPPPAVSPAPTSSPPSSA) has biased composition (pro residues). The GPI-anchor amidated asparagine moiety is linked to residue asparagine 106. The propeptide at 107 to 130 (AALTNKAFVVGSLVAAIIYAVVLA) is removed in mature form.

It belongs to the classical AGP family. Post-translationally, O-glycosylated on hydroxyprolines; noncontiguous hydroxylproline residues are glycosylated with arabinogalactan.

The protein resides in the cell membrane. Its function is as follows. Proteoglycan that seems to be implicated in diverse developmental roles such as differentiation, cell-cell recognition, embryogenesis and programmed cell death. The protein is Classical arabinogalactan protein 7 (AGP7) of Arabidopsis thaliana (Mouse-ear cress).